The chain runs to 1058 residues: Leucine--tRNA ligase, cytoplasmic (1058 aa).

Residues 48-58 (PYMNGRLHVGH) carry the 'HIGH' region motif. The short motif at 711–715 (KMSKS) is the 'KMSKS' region element. K714 contributes to the ATP binding site.

It belongs to the class-I aminoacyl-tRNA synthetase family.

It localises to the cytoplasm. It carries out the reaction tRNA(Leu) + L-leucine + ATP = L-leucyl-tRNA(Leu) + AMP + diphosphate. The sequence is that of Leucine--tRNA ligase, cytoplasmic (leuS) from Dictyostelium discoideum (Social amoeba).